The following is a 439-amino-acid chain: Adenylosuccinate synthetase (439 aa).

GTP is bound by residues 25 to 31, 53 to 55, and lysine 62; these read GDEGKGK and GHT. Residue aspartate 26 is the Proton acceptor of the active site. Mg(2+)-binding residues include aspartate 26 and glycine 53. Residues 26–29 and 51–54 each bind IMP; these read DEGK and NAGH. Histidine 54 functions as the Proton donor in the catalytic mechanism. 4 residues coordinate IMP: threonine 141, arginine 155, asparagine 232, and threonine 247. Threonine 307 is a binding site for GTP. Residue 307–313 participates in substrate binding; sequence TTTNRPR. Arginine 311 is an IMP binding site. Residues arginine 313, 339 to 341, and 425 to 427 each bind GTP; these read KLD and GVG.

It belongs to the adenylosuccinate synthetase family. Homodimer. Mg(2+) serves as cofactor.

The protein localises to the cytoplasm. It catalyses the reaction IMP + L-aspartate + GTP = N(6)-(1,2-dicarboxyethyl)-AMP + GDP + phosphate + 2 H(+). It participates in purine metabolism; AMP biosynthesis via de novo pathway; AMP from IMP: step 1/2. Its function is as follows. Plays an important role in the salvage pathway for purine nucleotide biosynthesis. Catalyzes the first commited step in the biosynthesis of AMP from IMP. In Plasmodium chabaudi chabaudi, this protein is Adenylosuccinate synthetase.